The primary structure comprises 203 residues: Thymidylate kinase (203 aa).

ATP is bound at residue 7–14 (GGEGAGKT).

Belongs to the thymidylate kinase family.

It catalyses the reaction dTMP + ATP = dTDP + ADP. Its function is as follows. Phosphorylation of dTMP to form dTDP in both de novo and salvage pathways of dTTP synthesis. The protein is Thymidylate kinase (tmk) of Chlamydia trachomatis serovar D (strain ATCC VR-885 / DSM 19411 / UW-3/Cx).